The primary structure comprises 399 residues: Serine palmitoyltransferase (399 aa).

Residues glycine 113 to phenylalanine 114, histidine 213, threonine 241, and serine 243 each bind pyridoxal 5'-phosphate. Lysine 244 is modified (N6-(pyridoxal phosphate)lysine).

This sequence belongs to the class-II pyridoxal-phosphate-dependent aminotransferase family. Homodimer. Pyridoxal 5'-phosphate is required as a cofactor.

The protein resides in the cytoplasm. It catalyses the reaction L-serine + hexadecanoyl-CoA + H(+) = 3-oxosphinganine + CO2 + CoA. The protein operates within lipid metabolism; sphingolipid metabolism. In terms of biological role, catalyzes the condensation of L-serine with palmitoyl-CoA (hexadecanoyl-CoA) to produce 3-oxosphinganine. The chain is Serine palmitoyltransferase from Sphingobacterium spiritivorum (Flavobacterium spiritivorum).